A 235-amino-acid polypeptide reads, in one-letter code: Uridylate kinase (235 aa).

9–12 (KLSG) contacts ATP. Gly-51 contributes to the UMP binding site. Gly-52 and Arg-56 together coordinate ATP. Residues Asp-71 and 132 to 139 (TGNPYFTT) each bind UMP. Thr-159, Tyr-165, and Asp-168 together coordinate ATP.

It belongs to the UMP kinase family. As to quaternary structure, homohexamer.

The protein localises to the cytoplasm. It catalyses the reaction UMP + ATP = UDP + ADP. The protein operates within pyrimidine metabolism; CTP biosynthesis via de novo pathway; UDP from UMP (UMPK route): step 1/1. Its activity is regulated as follows. Inhibited by UTP. In terms of biological role, catalyzes the reversible phosphorylation of UMP to UDP. This chain is Uridylate kinase, found in Cytophaga hutchinsonii (strain ATCC 33406 / DSM 1761 / CIP 103989 / NBRC 15051 / NCIMB 9469 / D465).